The chain runs to 182 residues: Large ribosomal subunit protein uL5 (182 aa).

The protein belongs to the universal ribosomal protein uL5 family. As to quaternary structure, part of the 50S ribosomal subunit; part of the 5S rRNA/L5/L18/L25 subcomplex. Contacts the 5S rRNA and the P site tRNA. Forms a bridge to the 30S subunit in the 70S ribosome.

In terms of biological role, this is one of the proteins that bind and probably mediate the attachment of the 5S RNA into the large ribosomal subunit, where it forms part of the central protuberance. In the 70S ribosome it contacts protein S13 of the 30S subunit (bridge B1b), connecting the 2 subunits; this bridge is implicated in subunit movement. Contacts the P site tRNA; the 5S rRNA and some of its associated proteins might help stabilize positioning of ribosome-bound tRNAs. This chain is Large ribosomal subunit protein uL5, found in Borreliella burgdorferi (strain ATCC 35210 / DSM 4680 / CIP 102532 / B31) (Borrelia burgdorferi).